Reading from the N-terminus, the 835-residue chain is Neuroligin-2 (835 aa).

Residues 1 to 14 (MWLLALCLVGLAGA) form the signal peptide. The Extracellular portion of the chain corresponds to 15–677 (QRGGGGPGGG…DSRDYSTELS (663 aa)). 2 N-linked (GlcNAc...) asparagine glycosylation sites follow: Asn98 and Asn136. 3 disulfides stabilise this stretch: Cys106–Cys141, Cys317–Cys328, and Cys487–Cys521. N-linked (GlcNAc...) asparagine glycosylation occurs at Asn522. Residues 623-668 (PPYATRWPPRPPAGAPGTRRPPPPATLPPEPEPEPGPRAYDRFPGD) form a disordered region. Pro residues predominate over residues 630–658 (PPRPPAGAPGTRRPPPPATLPPEPEPEPG). Residues 678 to 698 (VTVAVGASLLFLNILAFAALY) traverse the membrane as a helical segment. The interval 678-698 (VTVAVGASLLFLNILAFAALY) is required for interaction with LHFPL4. Residues 699 to 835 (YKRDRRQELR…LPHPHSTTRV (137 aa)) are Cytoplasmic-facing. Phosphoserine is present on residues Ser713 and Ser718. The tract at residues 790-835 (LLPSGLGPPPPPPPPSLHPFGPFPPPPPTATSHNNTLPHPHSTTRV) is disordered. The span at 795–818 (LGPPPPPPPPSLHPFGPFPPPPPT) shows a compositional bias: pro residues. Over residues 823-835 (NNTLPHPHSTTRV) the composition is skewed to polar residues.

Belongs to the type-B carboxylesterase/lipase family. In terms of assembly, interacts with neurexins NRXN1, NRXN2 and NRXN3. Interaction with neurexins is mediated by heparan sulfate glycan modification on neurexin. Interacts (via its C-terminus) with DLG4/PSD-95 (via PDZ domain 3). Interacts with PATJ. Interacts with GPHN. Interacts with MDGA1 and MDGA2. Found in a complex with MAGI2 and IGSF9B, where it interacts with MAGI2 (via WW 1, WW 2 and PDZ 2 domains). Identified in a complex of 720 kDa composed of LHFPL4, NLGN2, GABRA1, GABRB2, GABRG2 and GABRB3. Interacts with LHFPL4; leading to mutual regulation of the protein level and synaptic clustering. Interacts with NLGN2. As to expression, expressed in the blood vessel walls. Detected in colon, brain and pancreas islets of Langerhans (at protein level). Detected in brain, and at lower levels in pancreas islet beta cells.

Its subcellular location is the cell membrane. The protein localises to the postsynaptic cell membrane. It localises to the presynaptic cell membrane. Its function is as follows. Transmembrane scaffolding protein involved in cell-cell interactions via its interactions with neurexin family members. Mediates cell-cell interactions both in neurons and in other types of cells, such as Langerhans beta cells. Plays a role in synapse function and synaptic signal transmission, especially via gamma-aminobutyric acid receptors (GABA(A) receptors). Functions by recruiting and clustering synaptic proteins. Promotes clustering of postsynaptic GABRG2 and GPHN. Promotes clustering of postsynaptic LHFPL4. Modulates signaling by inhibitory synapses, and thereby plays a role in controlling the ratio of signaling by excitatory and inhibitory synapses and information processing. Required for normal signal amplitude from inhibitory synapses, but is not essential for normal signal frequency. May promote the initial formation of synapses, but is not essential for this. In vitro, triggers the de novo formation of presynaptic structures. Mediates cell-cell interactions between Langerhans beta cells and modulates insulin secretion. This is Neuroligin-2 (NLGN2) from Homo sapiens (Human).